The following is a 580-amino-acid chain: MSTASLRKRTGSLTILGASALTSLLLAMPAFAGEVYLDGLATAQTHQKFIVTYKDGSTALASPSALTTSLRTAARAVPAKAGKALGLNSVRRLALGPELVRADRALDRAEAETLMRQLAADPNVQSVEVDQILHATLTPNDTRLSEQWAFGTTNAGLNIRPAWDKATGSGTVVAVIDTGITSHADLNANILAGYDFISDATTARDGNGRDSNAADEGDWYAANECGAGIPAASSSWHGTHVAGTVAAVTNNTTGVAGTAYGAKVVPVRVLGKCGGSLSDIADAIVWASGGTVSGIPANANPAEVINMSLGGGGSCSTTMQNAINGAVSRGTTVVVAAGNDASNVSGSLPANCANVIAVAATTSAGAKASYSNFGTGIDVSAPGSSILSTLNSGTTTPGSASYASYNGTSMASPHVAGVVALVQSVAPTALTPAAVETLLKNTARALPGACSGGCGAGIVNADAAVTAAINGGSGGGGGGGNTLTNGTPVTGLGAATGAELNYTITVPAGSGTLTVTTSGGSGDADLYVRAGSAPTDSAYTCRPYRSGNAETCTITAPSGTYYVRLKAYSTFSGVTLRASY.

The N-terminal stretch at 1 to 32 (MSTASLRKRTGSLTILGASALTSLLLAMPAFA) is a signal peptide. The propeptide occupies 33-136 (GEVYLDGLAT…VEVDQILHAT (104 aa)). Positions 147 to 465 (QWAFGTTNAG…AGIVNADAAV (319 aa)) constitute a Peptidase S8 domain. Catalysis depends on charge relay system residues Asp-177 and His-237. 2 disulfides stabilise this stretch: Cys-225–Cys-273 and Cys-315–Cys-352. Ser-409 (charge relay system) is an active-site residue. Cys-450 and Cys-454 form a disulfide bridge.

It belongs to the peptidase S8 family.

Its subcellular location is the secreted. The chain is Extracellular protease from Xanthomonas campestris pv. campestris (strain ATCC 33913 / DSM 3586 / NCPPB 528 / LMG 568 / P 25).